The primary structure comprises 534 residues: Lariat debranching enzyme A (534 aa).

A divalent metal cation-binding residues include Cys-8, His-10, Asp-39, and Asn-84. Residues 124-154 (SGIFKSHDYRKGHFERPPYSKDTVRSAYHVR) are lariat recognition loop. Residues His-174, His-226, and His-228 each contribute to the a divalent metal cation site. 2 disordered regions span residues 386–439 (EEEK…QEDE) and 469–534 (SMAV…DEDE). Residues 388–400 (EKEDFDMTEDNEA) are compositionally biased toward acidic residues. The span at 413–424 (STDTSILSTSVN) shows a compositional bias: polar residues. A compositionally biased stretch (acidic residues) spans 428-439 (ITLEDDDEQEDE). The span at 484–499 (ELDRSESSQTEGEGKQ) shows a compositional bias: basic and acidic residues.

This sequence belongs to the lariat debranching enzyme family. Fe(2+) serves as cofactor. It depends on Zn(2+) as a cofactor. The cofactor is Mn(2+).

The protein resides in the nucleus. Active in presence of diverse metals including Fe(2+), Zn(2+), Mn(2+). Also activated by Ca(2+). Binds two metal cations in two adjacent alpha and beta metal-binding pockets. Cleaves the 2'-5' phosphodiester linkage at the branch point of excised lariat intron RNA and converts them into linear molecules that can be subsequently degraded, thereby facilitating ribonucleotide turnover. Linked to its role in pre-mRNA processing mechanism, may also participate in retrovirus replication and have an antiviral cell-intrinsic defense function. This Xenopus laevis (African clawed frog) protein is Lariat debranching enzyme A (dbr1-a).